Here is a 329-residue protein sequence, read N- to C-terminus: Minor capsid protein A1 (329 aa).

It localises to the virion. In terms of biological role, minor capsid protein. The protein is Minor capsid protein A1 of Escherichia coli (Bacteriophage Q-beta).